A 547-amino-acid polypeptide reads, in one-letter code: Chaperonin GroEL (547 aa).

ATP is bound by residues 30-33 (TLGP), Lys51, 87-91 (DGTTT), Gly415, 479-481 (NAA), and Asp495.

It belongs to the chaperonin (HSP60) family. As to quaternary structure, forms a cylinder of 14 subunits composed of two heptameric rings stacked back-to-back. Interacts with the co-chaperonin GroES.

The protein localises to the cytoplasm. It catalyses the reaction ATP + H2O + a folded polypeptide = ADP + phosphate + an unfolded polypeptide.. In terms of biological role, together with its co-chaperonin GroES, plays an essential role in assisting protein folding. The GroEL-GroES system forms a nano-cage that allows encapsulation of the non-native substrate proteins and provides a physical environment optimized to promote and accelerate protein folding. This Polynucleobacter necessarius subsp. necessarius (strain STIR1) protein is Chaperonin GroEL.